We begin with the raw amino-acid sequence, 1031 residues long: GTPase activating protein Gyp51 (1031 aa).

Basic and acidic residues predominate over residues methionine 1 to glutamate 32. Disordered stretches follow at residues methionine 1–asparagine 229, phenylalanine 278–aspartate 317, aspartate 339–alanine 371, asparagine 420–valine 459, and lysine 490–proline 520. Polar residues predominate over residues threonine 43–glutamine 59. Residues phenylalanine 62–isoleucine 78 are compositionally biased toward acidic residues. Positions serine 105–asparagine 117 are enriched in polar residues. Over residues glutamate 195 to glutamate 217 the composition is skewed to basic and acidic residues. The segment covering serine 219 to asparagine 229 has biased composition (acidic residues). Residues phenylalanine 278–glutamate 306 show a composition bias toward polar residues. Polar residues-rich tracts occupy residues asparagine 420–glutamine 429, glycine 436–proline 455, and threonine 493–histidine 505. A Rab-GAP TBC domain is found at histidine 610 to glycine 806. The chain crosses the membrane as a helical span at residues leucine 798–leucine 818.

Belongs to the GYP5 family.

The protein resides in the membrane. It localises to the cytoplasm. Functionally, GTPase-activating protein involved in ER to Golgi trafficking and polarized exocytosis. In Schizosaccharomyces pombe (strain 972 / ATCC 24843) (Fission yeast), this protein is GTPase activating protein Gyp51 (gyp51).